A 225-amino-acid chain; its full sequence is Insulin-induced gene 2 protein (225 aa).

Topologically, residues 1–28 are cytoplasmic; sequence MAEGETESPGPKKCGPYISSVTSQSVNL. A helical membrane pass occupies residues 29 to 51; it reads MIRGVVLFFIGVFLALVLNLLQI. Topologically, residues 52 to 70 are lumenal; the sequence is QRNVTLFPPDVIASIFSSA. A helical transmembrane segment spans residues 71-88; sequence WWVPPCCGTASAVIGLLY. The Cytoplasmic segment spans residues 89-103; that stretch reads PCIDRHLGEPHKFKR. A helical transmembrane segment spans residues 104–126; that stretch reads EWSSVMRCVAVFVGINHASAKVD. Residues 127 to 129 are Lumenal-facing; the sequence is FDN. Residues 130–148 traverse the membrane as a helical segment; that stretch reads NIQLSLTLAALSIGLWWTF. Topologically, residues 149–153 are cytoplasmic; it reads DRSRS. Phosphoserine; by PCK1 is present on Ser-151. Residues 154–175 form a helical membrane-spanning segment; it reads GFGLGVGIAFLATVVTQLLVYN. Over 176–189 the chain is Lumenal; that stretch reads GVYQYTSPDFLYVR. A helical transmembrane segment spans residues 190 to 207; that stretch reads SWLPCIFFAGGITMGNIG. At 208-225 the chain is on the cytoplasmic side; the sequence is RQLAMYECKVIAEKSHQE. Cysteine sulfenic acid (-SOH); alternate is present on Cys-215. Cys-215 is covalently cross-linked (Glycyl cysteine thioester (Cys-Gly) (interchain with G-Cter in ubiquitin); alternate). A KxHxx motif is present at residues 219–225; sequence AEKSHQE.

Belongs to the INSIG family. In terms of assembly, interacts with SCAP; interaction is direct and only takes place in the presence of sterols; it prevents interaction between SCAP and the coat protein complex II (COPII). Associates with the SCAP-SREBP complex (composed of SCAP and SREBF1/SREBP1 or SREBF2/SREBP2); association is mediated via its interaction with SCAP and only takes place in the presence of sterols. Interacts with RNF139. Interacts with RNF145. Post-translationally, phosphorylation at Ser-151 by PCK1 reduces binding to oxysterol, disrupting the interaction between INSIG2 and SCAP, thereby promoting nuclear translocation of SREBP proteins (SREBF1/SREBP1 or SREBF2/SREBP2) and subsequent transcription of downstream lipogenesis-related genes. In terms of processing, polyubiquitinated by AMFR/gp78 at Cys-215 in some tissues such as adipose tissues, undifferentiated myoblasts and liver, leading to its degradation. In differentiated myotubes, Cys-215 oxidation prevents ubiquitination at the same site, resulting in protein stabilization. Oxidized at Cys-215 in differentiated myotubes, preventing ubiquitination at the same site, and resulting in protein stabilization.

It is found in the endoplasmic reticulum membrane. Functionally, oxysterol-binding protein that mediates feedback control of cholesterol synthesis by controlling both endoplasmic reticulum to Golgi transport of SCAP and degradation of HMGCR. Acts as a negative regulator of cholesterol biosynthesis by mediating the retention of the SCAP-SREBP complex in the endoplasmic reticulum, thereby blocking the processing of sterol regulatory element-binding proteins (SREBPs) SREBF1/SREBP1 and SREBF2/SREBP2. Binds oxysterol, including 22-hydroxycholesterol, 24-hydroxycholesterol, 25-hydroxycholesterol and 27-hydroxycholesterol, regulating interaction with SCAP and retention of the SCAP-SREBP complex in the endoplasmic reticulum. In presence of oxysterol, interacts with SCAP, retaining the SCAP-SREBP complex in the endoplasmic reticulum, thereby preventing SCAP from escorting SREBF1/SREBP1 and SREBF2/SREBP2 to the Golgi. Sterol deprivation or phosphorylation by PCK1 reduce oxysterol-binding, disrupting the interaction between INSIG2 and SCAP, thereby promoting Golgi transport of the SCAP-SREBP complex, followed by processing and nuclear translocation of SREBF1/SREBP1 and SREBF2/SREBP2. Also regulates cholesterol synthesis by regulating degradation of HMGCR: initiates the sterol-mediated ubiquitin-mediated endoplasmic reticulum-associated degradation (ERAD) of HMGCR via recruitment of the reductase to the ubiquitin ligase RNF139. In Homo sapiens (Human), this protein is Insulin-induced gene 2 protein.